Here is a 377-residue protein sequence, read N- to C-terminus: Serine protease inhibitor (377 aa).

A signal peptide spans 1-27 (MAALQAAVSSQLAISFFSSLIVPGAEK). An N-linked (GlcNAc...) asparagine glycan is attached at Asn-301. Positions 328–349 (GTEAAAATGFGVNFMSMPMQVR) are RCL. An N-linked (GlcNAc...) asparagine glycan is attached at Asn-361.

The protein belongs to the serpin family.

Inhibitor of serine proteases. Inhibits chymotrypsin, cathepsin G and human neutrophil elastase. The protein is Serine protease inhibitor of Cyanea capillata (Lion's mane jellyfish).